A 1224-amino-acid chain; its full sequence is A disintegrin and metalloproteinase with thrombospondin motifs 16 (1224 aa).

An N-terminal signal peptide occupies residues M1 to Q24. A propeptide spanning residues A25–R279 is cleaved from the precursor. The interval G31–G53 is disordered. Positions P40 to E50 are enriched in pro residues. N156 is a glycosylation site (N-linked (GlcNAc...) asparagine). Residues H247–K254 carry the Cysteine switch motif. C249 serves as a coordination point for Zn(2+). Residues L290 to P495 enclose the Peptidase M12B domain. A glycan (N-linked (GlcNAc...) asparagine) is linked at N310. 11 cysteine pairs are disulfide-bonded: C366–C417, C392–C399, C411–C490, C450–C474, C518–C543, C529–C550, C538–C569, C563–C574, C598–C635, C602–C640, and C613–C625. Residue H433 participates in Zn(2+) binding. The active site involves E434. 2 residues coordinate Zn(2+): H437 and H443. In terms of domain architecture, Disintegrin spans K496–T585. The TSP type-1 1 domain maps to H586 to P641. N-linked (GlcNAc...) asparagine glycosylation is found at N741, N780, N835, N905, and N935. Residues I747–T873 are spacer. 5 consecutive TSP type-1 domains span residues W874–C922, C927–P987, P988–H1048, K1051–P1115, and R1127–P1181. Cystine bridges form between C939–C981, C943–C986, and C954–C970. One can recognise a PLAC domain in the interval K1186–N1223.

Requires Zn(2+) as cofactor. Post-translationally, the precursor is cleaved by a furin endopeptidase. Glycosylated. Can be O-fucosylated by POFUT2 on a serine or a threonine residue found within the consensus sequence C1-X(2)-(S/T)-C2-G of the TSP type-1 repeat domains where C1 and C2 are the first and second cysteine residue of the repeat, respectively. Fucosylated repeats can then be further glycosylated by the addition of a beta-1,3-glucose residue by the glucosyltransferase, B3GALTL. Fucosylation mediates the efficient secretion of ADAMTS family members. Can also be C-glycosylated with one or two mannose molecules on tryptophan residues within the consensus sequence W-X-X-W of the TPRs, and N-glycosylated. These other glycosylations can also facilitate secretion. In terms of tissue distribution, expressed in fetal lung and kidney and in adult prostate and ovary.

It is found in the secreted. The protein resides in the extracellular space. Its subcellular location is the extracellular matrix. The chain is A disintegrin and metalloproteinase with thrombospondin motifs 16 (ADAMTS16) from Homo sapiens (Human).